The following is a 466-amino-acid chain: Ribulose bisphosphate carboxylase large chain (466 aa).

Lysine 5 is subject to N6,N6,N6-trimethyllysine. Substrate-binding residues include asparagine 114 and threonine 164. Catalysis depends on lysine 166, which acts as the Proton acceptor. Lysine 168 serves as a coordination point for substrate. Lysine 192, aspartate 194, and glutamate 195 together coordinate Mg(2+). Position 192 is an N6-carboxylysine (lysine 192). Histidine 285 serves as the catalytic Proton acceptor. Substrate contacts are provided by arginine 286, histidine 318, and serine 370.

This sequence belongs to the RuBisCO large chain family. Type I subfamily. In terms of assembly, heterohexadecamer of 8 large chains and 8 small chains; disulfide-linked. The disulfide link is formed within the large subunit homodimers. Mg(2+) serves as cofactor. The disulfide bond which can form in the large chain dimeric partners within the hexadecamer appears to be associated with oxidative stress and protein turnover.

Its subcellular location is the plastid. The protein resides in the chloroplast. The enzyme catalyses 2 (2R)-3-phosphoglycerate + 2 H(+) = D-ribulose 1,5-bisphosphate + CO2 + H2O. It catalyses the reaction D-ribulose 1,5-bisphosphate + O2 = 2-phosphoglycolate + (2R)-3-phosphoglycerate + 2 H(+). In terms of biological role, ruBisCO catalyzes two reactions: the carboxylation of D-ribulose 1,5-bisphosphate, the primary event in carbon dioxide fixation, as well as the oxidative fragmentation of the pentose substrate in the photorespiration process. Both reactions occur simultaneously and in competition at the same active site. This Isophysis tasmanica protein is Ribulose bisphosphate carboxylase large chain.